The following is a 452-amino-acid chain: MDGSETSHSSGLNDFLLRSSVSSGSRSMDVIIYLINDEVIQLTVDGLSVITAHELHKSIREALQLPETAQDVFALWLISPLLEVQLKPKHQPYKVCRQWHDLLARFTNCSSNDILQDEPYLQFRRNIFLPKARELQISHERILYLLYEEAKYNVLEGRYPCDVEDCEVLGGLACRLELGPYNQNEHTPATIRPKLDTLFPPYLCKKRNGGLLTTFKNRGGRQASFEQTVLNTYKEVKETSACTDEQAMKNHYKEYLKKCHELPYYGCAFFQGDVDKPAQGFLNRSGRKAVSVSVNLEGVSVIDRKEKHVLISLTYPELSWDHTYPDEDEHILWLEFDGESEGTPVNKLLKIYSKQAELMSGLIEYCIELSQSTESPASDSTPGNSQLSEKRSKLKRQESVLCNRMKHLTTIDYVEDGAKITRVKPKRTASFFTRQNTHNYSAVQPSETPTES.

Residues 28–374 (MDVIIYLIND…YCIELSQSTE (347 aa)) form the FERM domain. The span at 373 to 387 (TESPASDSTPGNSQL) shows a compositional bias: polar residues. The disordered stretch occupies residues 373–395 (TESPASDSTPGNSQLSEKRSKLK).

It is found in the cytoplasm. The protein resides in the cytosol. It localises to the cell membrane. Functionally, promotes the cell surface stability of RHBDF1 and RHBDF2 and prevents their degradation via the endolysosomal pathway. By acting on RHBDF proteins, involved in ADAM17-mediated ligand shedding. May negatively regulate Wnt signaling. The chain is FERM domain-containing protein 8 (frmd8) from Xenopus laevis (African clawed frog).